A 311-amino-acid polypeptide reads, in one-letter code: Methionyl-tRNA formyltransferase (311 aa).

110–113 (SLLP) provides a ligand contact to (6S)-5,6,7,8-tetrahydrofolate.

It belongs to the Fmt family.

The enzyme catalyses L-methionyl-tRNA(fMet) + (6R)-10-formyltetrahydrofolate = N-formyl-L-methionyl-tRNA(fMet) + (6S)-5,6,7,8-tetrahydrofolate + H(+). Its function is as follows. Attaches a formyl group to the free amino group of methionyl-tRNA(fMet). The formyl group appears to play a dual role in the initiator identity of N-formylmethionyl-tRNA by promoting its recognition by IF2 and preventing the misappropriation of this tRNA by the elongation apparatus. The sequence is that of Methionyl-tRNA formyltransferase from Streptococcus gordonii (strain Challis / ATCC 35105 / BCRC 15272 / CH1 / DL1 / V288).